The primary structure comprises 206 residues: LexA repressor (206 aa).

Positions 28–48 (VREIGQAVGLASSSTVHGHLS) form a DNA-binding region, H-T-H motif. Residues S128 and K166 each act as for autocatalytic cleavage activity in the active site.

Belongs to the peptidase S24 family. In terms of assembly, homodimer.

It catalyses the reaction Hydrolysis of Ala-|-Gly bond in repressor LexA.. Its function is as follows. Represses a number of genes involved in the response to DNA damage (SOS response), including recA and lexA. In the presence of single-stranded DNA, RecA interacts with LexA causing an autocatalytic cleavage which disrupts the DNA-binding part of LexA, leading to derepression of the SOS regulon and eventually DNA repair. This is LexA repressor from Bacillus cytotoxicus (strain DSM 22905 / CIP 110041 / 391-98 / NVH 391-98).